Consider the following 232-residue polypeptide: Orotidine 5'-phosphate decarboxylase (232 aa).

Residues D11, K33, 60–69 (DLKFHDIPNT), T120, R181, Q190, G210, and R211 each bind substrate. Residue K62 is the Proton donor of the active site.

This sequence belongs to the OMP decarboxylase family. Type 1 subfamily. Homodimer.

It carries out the reaction orotidine 5'-phosphate + H(+) = UMP + CO2. Its pathway is pyrimidine metabolism; UMP biosynthesis via de novo pathway; UMP from orotate: step 2/2. Its function is as follows. Catalyzes the decarboxylation of orotidine 5'-monophosphate (OMP) to uridine 5'-monophosphate (UMP). In Vibrio vulnificus (strain CMCP6), this protein is Orotidine 5'-phosphate decarboxylase.